Here is a 182-residue protein sequence, read N- to C-terminus: P21 prophage-derived terminase small subunit (182 aa).

Serine 31–glycine 36 contacts ATP.

Belongs to the terminase small subunit family. Heterooligomer of gp1 and gp2.

In terms of biological role, involved in the initiation of the phage DNA packaging into the prohead. Processes replicating concatemeric DNA into pieces of unit length with cohesive ends. This is P21 prophage-derived terminase small subunit (nohA) from Escherichia coli O6:H1 (strain CFT073 / ATCC 700928 / UPEC).